A 196-amino-acid chain; its full sequence is Adenylyl-sulfate kinase (196 aa).

31 to 38 (GLSGAGKS) is a binding site for ATP. Catalysis depends on serine 105, which acts as the Phosphoserine intermediate.

This sequence belongs to the APS kinase family.

The enzyme catalyses adenosine 5'-phosphosulfate + ATP = 3'-phosphoadenylyl sulfate + ADP + H(+). It functions in the pathway sulfur metabolism; hydrogen sulfide biosynthesis; sulfite from sulfate: step 2/3. In terms of biological role, catalyzes the synthesis of activated sulfate. The polypeptide is Adenylyl-sulfate kinase (cysC) (Pseudomonas aeruginosa (strain ATCC 15692 / DSM 22644 / CIP 104116 / JCM 14847 / LMG 12228 / 1C / PRS 101 / PAO1)).